Consider the following 155-residue polypeptide: Nucleoside diphosphate kinase, cytosolic (155 aa).

Residues lysine 16, phenylalanine 64, arginine 92, threonine 98, arginine 109, and asparagine 119 each coordinate ATP. The Pros-phosphohistidine intermediate role is filled by histidine 122.

It belongs to the NDK family. As to quaternary structure, homohexamer. Mg(2+) serves as cofactor.

The protein localises to the cytoplasm. It catalyses the reaction a 2'-deoxyribonucleoside 5'-diphosphate + ATP = a 2'-deoxyribonucleoside 5'-triphosphate + ADP. It carries out the reaction a ribonucleoside 5'-diphosphate + ATP = a ribonucleoside 5'-triphosphate + ADP. Functionally, major role in the synthesis of nucleoside triphosphates other than ATP. This Dictyostelium discoideum (Social amoeba) protein is Nucleoside diphosphate kinase, cytosolic (ndkC-1).